We begin with the raw amino-acid sequence, 365 residues long: Aspartate-semialdehyde dehydrogenase (365 aa).

Thr12, Gly13, Ser14, Val15, Ser37, Ser40, Leu85, and Asp86 together coordinate NADP(+). Cys156 (acyl-thioester intermediate) is an active-site residue. Gly188 is a binding site for NADP(+). His256 serves as the catalytic Proton acceptor. Asn343 lines the NADP(+) pocket.

Belongs to the aspartate-semialdehyde dehydrogenase family. In terms of assembly, homotetramer; dimer of dimers.

It is found in the cytoplasm. Its subcellular location is the cytosol. The protein localises to the nucleus. The enzyme catalyses L-aspartate 4-semialdehyde + phosphate + NADP(+) = 4-phospho-L-aspartate + NADPH + H(+). It functions in the pathway amino-acid biosynthesis; L-methionine biosynthesis via de novo pathway; L-homoserine from L-aspartate: step 2/3. Its pathway is amino-acid biosynthesis; L-threonine biosynthesis; L-threonine from L-aspartate: step 2/5. With respect to regulation, inhibited by the non-competitive inhibitors phthalaldehyde and naphthalene, the competitive inhibitor 1,4-benzoquinone and derivates such as 2-chloro-3-methoxy-1,4-naphthoquinone, 2,3-dichloro-1,4-naphthoquinone, 2-chloro-1,4-naphthoquinone, 2-bromo-1,4-naphthoquinone and 2,3-dichloro-5,8-dihydroxy-1,4-naphthoquinone, and 5-aminoisoquinoline. Inhibited by vinyl sulfones. Catalyzes the NADPH-dependent formation of L-aspartate 4-semialdehyde (L-ASA) by the reductive dephosphorylation of 4-phospho-L-aspartate. Mediates the second step in the biosynthesis of amino acids that derive from aspartate (the aspartate family of amino acids), including methioinine and threonine, the latter of which is a precursor to isoleucine. The polypeptide is Aspartate-semialdehyde dehydrogenase (Candida albicans (strain SC5314 / ATCC MYA-2876) (Yeast)).